The primary structure comprises 150 residues: 3-hydroxyacyl-[acyl-carrier-protein] dehydratase FabZ (150 aa).

H56 is a catalytic residue.

It belongs to the thioester dehydratase family. FabZ subfamily.

Its subcellular location is the cytoplasm. The enzyme catalyses a (3R)-hydroxyacyl-[ACP] = a (2E)-enoyl-[ACP] + H2O. Its function is as follows. Involved in unsaturated fatty acids biosynthesis. Catalyzes the dehydration of short chain beta-hydroxyacyl-ACPs and long chain saturated and unsaturated beta-hydroxyacyl-ACPs. The protein is 3-hydroxyacyl-[acyl-carrier-protein] dehydratase FabZ of Desulfotalea psychrophila (strain LSv54 / DSM 12343).